The chain runs to 107 residues: U1-lycotoxin-Ls1p (107 aa).

An N-terminal signal peptide occupies residues 1 to 20 (MMKVLVVVALLVTLISYSSS). The propeptide occupies 21 to 41 (EGIDDLEADELLSLMANEQTR). 4 cysteine pairs are disulfide-bonded: Cys-44–Cys-59, Cys-51–Cys-68, Cys-58–Cys-86, and Cys-70–Cys-84.

The protein belongs to the neurotoxin 19 (CSTX) family. 04 (U1-Lctx) subfamily. In terms of tissue distribution, expressed by the venom gland.

The protein localises to the secreted. In Lycosa singoriensis (Wolf spider), this protein is U1-lycotoxin-Ls1p.